We begin with the raw amino-acid sequence, 87 residues long: Small ribosomal subunit protein bS16 (87 aa).

Belongs to the bacterial ribosomal protein bS16 family.

The polypeptide is Small ribosomal subunit protein bS16 (Fusobacterium nucleatum subsp. nucleatum (strain ATCC 25586 / DSM 15643 / BCRC 10681 / CIP 101130 / JCM 8532 / KCTC 2640 / LMG 13131 / VPI 4355)).